The chain runs to 270 residues: Ethanolamine ammonia-lyase small subunit (270 aa).

Residues valine 166, glutamate 187, and cysteine 216 each contribute to the adenosylcob(III)alamin site.

It belongs to the EutC family. As to quaternary structure, the basic unit is a heterodimer which dimerizes to form tetramers. The heterotetramers trimerize; 6 large subunits form a core ring with 6 small subunits projecting outwards. Requires adenosylcob(III)alamin as cofactor.

It is found in the bacterial microcompartment. It carries out the reaction ethanolamine = acetaldehyde + NH4(+). It participates in amine and polyamine degradation; ethanolamine degradation. Catalyzes the deamination of various vicinal amino-alcohols to oxo compounds. Allows this organism to utilize ethanolamine as the sole source of nitrogen and carbon in the presence of external vitamin B12. This chain is Ethanolamine ammonia-lyase small subunit, found in Ralstonia nicotianae (strain ATCC BAA-1114 / GMI1000) (Ralstonia solanacearum).